The primary structure comprises 993 residues: ER membrane protein complex subunit 1 (993 aa).

A signal peptide spans 1 to 22 (MAAEWASRFWLWATLLIPAAAV). At 23–962 (YEDQVGKFDW…FDVLKDDYDY (940 aa)) the chain is on the lumenal side. 2 disulfides stabilise this stretch: Cys227/Cys237 and Cys338/Cys368. 3 N-linked (GlcNAc...) asparagine glycosylation sites follow: Asn370, Asn818, and Asn913. Residues 963–983 (VLISSVLFGLVFATMITKRLA) traverse the membrane as a helical segment. The Cytoplasmic portion of the chain corresponds to 984–993 (QVKLLNRAWR).

It belongs to the EMC1 family. In terms of assembly, component of the ER membrane protein complex (EMC).

It is found in the endoplasmic reticulum membrane. Its function is as follows. Part of the endoplasmic reticulum membrane protein complex (EMC) that enables the energy-independent insertion into endoplasmic reticulum membranes of newly synthesized membrane proteins. Preferentially accommodates proteins with transmembrane domains that are weakly hydrophobic or contain destabilizing features such as charged and aromatic residues. Involved in the cotranslational insertion of multi-pass membrane proteins in which stop-transfer membrane-anchor sequences become ER membrane spanning helices. It is also required for the post-translational insertion of tail-anchored/TA proteins in endoplasmic reticulum membranes. By mediating the proper cotranslational insertion of N-terminal transmembrane domains in an N-exo topology, with translocated N-terminus in the lumen of the ER, controls the topology of multi-pass membrane proteins like the G protein-coupled receptors. By regulating the insertion of various proteins in membranes, it is indirectly involved in many cellular processes. The polypeptide is ER membrane protein complex subunit 1 (EMC1) (Homo sapiens (Human)).